A 564-amino-acid polypeptide reads, in one-letter code: Arginine--tRNA ligase (564 aa).

Residues 136 to 146 (ANPTGPLHMGN) carry the 'HIGH' region motif.

Belongs to the class-I aminoacyl-tRNA synthetase family. In terms of assembly, monomer.

The protein localises to the cytoplasm. It carries out the reaction tRNA(Arg) + L-arginine + ATP = L-arginyl-tRNA(Arg) + AMP + diphosphate. This is Arginine--tRNA ligase from Acetivibrio thermocellus (strain ATCC 27405 / DSM 1237 / JCM 9322 / NBRC 103400 / NCIMB 10682 / NRRL B-4536 / VPI 7372) (Clostridium thermocellum).